Reading from the N-terminus, the 293-residue chain is Ribosomal RNA small subunit methyltransferase A (293 aa).

Asn38, Val40, Gly65, Glu86, Asp116, and Asn133 together coordinate S-adenosyl-L-methionine.

The protein belongs to the class I-like SAM-binding methyltransferase superfamily. rRNA adenine N(6)-methyltransferase family. RsmA subfamily.

The protein localises to the cytoplasm. The catalysed reaction is adenosine(1518)/adenosine(1519) in 16S rRNA + 4 S-adenosyl-L-methionine = N(6)-dimethyladenosine(1518)/N(6)-dimethyladenosine(1519) in 16S rRNA + 4 S-adenosyl-L-homocysteine + 4 H(+). Specifically dimethylates two adjacent adenosines (A1518 and A1519) in the loop of a conserved hairpin near the 3'-end of 16S rRNA in the 30S particle. May play a critical role in biogenesis of 30S subunits. This is Ribosomal RNA small subunit methyltransferase A from Paenarthrobacter aurescens (strain TC1).